The following is a 290-amino-acid chain: Probable branched-chain-amino-acid aminotransferase (290 aa).

Lys155 bears the N6-(pyridoxal phosphate)lysine mark.

This sequence belongs to the class-IV pyridoxal-phosphate-dependent aminotransferase family. It depends on pyridoxal 5'-phosphate as a cofactor.

The catalysed reaction is L-leucine + 2-oxoglutarate = 4-methyl-2-oxopentanoate + L-glutamate. The enzyme catalyses L-isoleucine + 2-oxoglutarate = (S)-3-methyl-2-oxopentanoate + L-glutamate. It catalyses the reaction L-valine + 2-oxoglutarate = 3-methyl-2-oxobutanoate + L-glutamate. Its pathway is amino-acid biosynthesis; L-isoleucine biosynthesis; L-isoleucine from 2-oxobutanoate: step 4/4. It functions in the pathway amino-acid biosynthesis; L-leucine biosynthesis; L-leucine from 3-methyl-2-oxobutanoate: step 4/4. The protein operates within amino-acid biosynthesis; L-valine biosynthesis; L-valine from pyruvate: step 4/4. Its function is as follows. Acts on leucine, isoleucine and valine. This Rickettsia felis (strain ATCC VR-1525 / URRWXCal2) (Rickettsia azadi) protein is Probable branched-chain-amino-acid aminotransferase (ilvE).